Reading from the N-terminus, the 419-residue chain is UDP-N-acetylglucosamine 1-carboxyvinyltransferase (419 aa).

Residue 22–23 participates in phosphoenolpyruvate binding; that stretch reads KN. Residue Arg91 coordinates UDP-N-acetyl-alpha-D-glucosamine. The active-site Proton donor is the Cys115. Cys115 carries the post-translational modification 2-(S-cysteinyl)pyruvic acid O-phosphothioketal. UDP-N-acetyl-alpha-D-glucosamine contacts are provided by residues 120-124, 160-163, Asp305, and Ile327; these read RPVDL and KVSV.

The protein belongs to the EPSP synthase family. MurA subfamily.

The protein resides in the cytoplasm. It carries out the reaction phosphoenolpyruvate + UDP-N-acetyl-alpha-D-glucosamine = UDP-N-acetyl-3-O-(1-carboxyvinyl)-alpha-D-glucosamine + phosphate. Its pathway is cell wall biogenesis; peptidoglycan biosynthesis. With respect to regulation, in vitro inhibited by covalent binding of fosfomycin and the fungal product terreic acid in the presence of substrate UDP-N-acetylglucosamine, with an inactivation rate constant of 130 M(-1)sec(-1) for terreic acid. Functionally, cell wall formation. Adds enolpyruvyl to UDP-N-acetylglucosamine. Target for the antibiotic fosfomycin. The polypeptide is UDP-N-acetylglucosamine 1-carboxyvinyltransferase (Enterobacter cloacae subsp. cloacae (strain ATCC 13047 / DSM 30054 / NBRC 13535 / NCTC 10005 / WDCM 00083 / NCDC 279-56)).